The sequence spans 175 residues: Lithostathine (175 aa).

An N-terminal signal peptide occupies residues 1-26; the sequence is MLPSLGLPRLSWMLLSCLMLLSQIQG. A propeptide spanning residues 27 to 37 is cleaved from the precursor; the sequence is ENSQKELPSAR. The C-type lectin domain maps to 38–173; the sequence is ISCPSGSMAY…NLNLPYVCKF (136 aa). 3 disulfide bridges follow: Cys-40–Cys-51, Cys-68–Cys-171, and Cys-146–Cys-163.

Cleaved to give an A chain and a B chain joined by a disulfide bond. As to expression, in pancreatic acinar cells.

The protein resides in the secreted. Might act as an inhibitor of spontaneous calcium carbonate precipitation. This Bos taurus (Bovine) protein is Lithostathine (PTP).